We begin with the raw amino-acid sequence, 170 residues long: Urease accessory protein UreE (170 aa).

The interval E134–E170 is disordered.

This sequence belongs to the UreE family.

The protein resides in the cytoplasm. Functionally, involved in urease metallocenter assembly. Binds nickel. Probably functions as a nickel donor during metallocenter assembly. The protein is Urease accessory protein UreE of Janthinobacterium sp. (strain Marseille) (Minibacterium massiliensis).